The chain runs to 383 residues: Acetylornithine deacetylase (383 aa).

His80 lines the Zn(2+) pocket. The active site involves Asp82. Asp112 is a binding site for Zn(2+). The active site involves Glu144. Positions 145, 169, and 355 each coordinate Zn(2+).

Belongs to the peptidase M20A family. ArgE subfamily. As to quaternary structure, homodimer. The cofactor is Zn(2+). Co(2+) is required as a cofactor. It depends on glutathione as a cofactor.

It localises to the cytoplasm. It catalyses the reaction N(2)-acetyl-L-ornithine + H2O = L-ornithine + acetate. It functions in the pathway amino-acid biosynthesis; L-arginine biosynthesis; L-ornithine from N(2)-acetyl-L-ornithine (linear): step 1/1. In terms of biological role, catalyzes the hydrolysis of the amide bond of N(2)-acetylated L-amino acids. Cleaves the acetyl group from N-acetyl-L-ornithine to form L-ornithine, an intermediate in L-arginine biosynthesis pathway, and a branchpoint in the synthesis of polyamines. The chain is Acetylornithine deacetylase from Escherichia coli O127:H6 (strain E2348/69 / EPEC).